Reading from the N-terminus, the 266-residue chain is Putative carbamate hydrolase RutD (266 aa).

The protein belongs to the AB hydrolase superfamily. Hydrolase RutD family.

The catalysed reaction is carbamate + 2 H(+) = NH4(+) + CO2. In terms of biological role, involved in pyrimidine catabolism. May facilitate the hydrolysis of carbamate, a reaction that can also occur spontaneously. This chain is Putative carbamate hydrolase RutD, found in Escherichia coli O127:H6 (strain E2348/69 / EPEC).